The chain runs to 477 residues: Argininosuccinate synthase (477 aa).

ATP-binding positions include 17 to 25 and Ala-43; that span reads AFSGGLDTS. An L-citrulline-binding site is contributed by Tyr-99. Positions 129 and 131 each coordinate ATP. Thr-131, Asn-135, and Asp-136 together coordinate L-aspartate. Residue Asn-135 participates in L-citrulline binding. Asp-136 serves as a coordination point for ATP. Arg-139 and Ser-192 together coordinate L-citrulline. Residue Asp-194 coordinates ATP. 3 residues coordinate L-citrulline: Thr-201, Glu-203, and Glu-280. Residues 450–477 are disordered; that stretch reads DQITENPEVQAEPEEEALDAAAMEAGTD. Positions 468–477 are enriched in low complexity; sequence DAAAMEAGTD.

The protein belongs to the argininosuccinate synthase family. Type 2 subfamily. Homotetramer.

It is found in the cytoplasm. The enzyme catalyses L-citrulline + L-aspartate + ATP = 2-(N(omega)-L-arginino)succinate + AMP + diphosphate + H(+). It participates in amino-acid biosynthesis; L-arginine biosynthesis; L-arginine from L-ornithine and carbamoyl phosphate: step 2/3. The sequence is that of Argininosuccinate synthase from Nocardioides sp. (strain ATCC BAA-499 / JS614).